The following is a 458-amino-acid chain: Glutamate--tRNA ligase 2 (458 aa).

A 'HIGH' region motif is present at residues 20–30 (PSPTGLIHVGN). A 'KMSKS' region motif is present at residues 251–255 (GLSKR). Position 254 (K254) interacts with ATP.

The protein belongs to the class-I aminoacyl-tRNA synthetase family. Glutamate--tRNA ligase type 1 subfamily. As to quaternary structure, monomer.

The protein localises to the cytoplasm. The catalysed reaction is tRNA(Glu) + L-glutamate + ATP = L-glutamyl-tRNA(Glu) + AMP + diphosphate. Functionally, catalyzes the attachment of glutamate to tRNA(Glu) in a two-step reaction: glutamate is first activated by ATP to form Glu-AMP and then transferred to the acceptor end of tRNA(Glu). In Xanthobacter autotrophicus (strain ATCC BAA-1158 / Py2), this protein is Glutamate--tRNA ligase 2.